We begin with the raw amino-acid sequence, 92 residues long: Small ribosomal subunit protein uS17 (92 aa).

Belongs to the universal ribosomal protein uS17 family. Part of the 30S ribosomal subunit.

In terms of biological role, one of the primary rRNA binding proteins, it binds specifically to the 5'-end of 16S ribosomal RNA. This chain is Small ribosomal subunit protein uS17, found in Cupriavidus necator (strain ATCC 17699 / DSM 428 / KCTC 22496 / NCIMB 10442 / H16 / Stanier 337) (Ralstonia eutropha).